Here is a 144-residue protein sequence, read N- to C-terminus: Transcription antitermination protein NusB (144 aa).

Belongs to the NusB family.

In terms of biological role, involved in transcription antitermination. Required for transcription of ribosomal RNA (rRNA) genes. Binds specifically to the boxA antiterminator sequence of the ribosomal RNA (rrn) operons. In Haemophilus influenzae (strain PittEE), this protein is Transcription antitermination protein NusB.